A 201-amino-acid polypeptide reads, in one-letter code: LexA repressor 1 (201 aa).

Positions L27 to Q47 form a DNA-binding region, H-T-H motif. Catalysis depends on for autocatalytic cleavage activity residues S122 and K159.

The protein belongs to the peptidase S24 family. As to quaternary structure, homodimer.

The catalysed reaction is Hydrolysis of Ala-|-Gly bond in repressor LexA.. In terms of biological role, represses a number of genes involved in the response to DNA damage (SOS response), including recA and lexA. In the presence of single-stranded DNA, RecA interacts with LexA causing an autocatalytic cleavage which disrupts the DNA-binding part of LexA, leading to derepression of the SOS regulon and eventually DNA repair. The chain is LexA repressor 1 from Xanthomonas axonopodis pv. citri (strain 306).